The sequence spans 100 residues: Enhancer of yellow 2 transcription factor (100 aa).

The protein belongs to the ENY2 family. In terms of assembly, component of the nuclear pore complex (NPC)-associated AMEX complex (anchoring and mRNA export complex), composed of at least e(y)2 and xmas-2. Component of the SAGA transcription coactivator-HAT complexes, at least composed of Ada2b, e(y)2, Pcaf/Gcn5, Taf10 and Nipped-A/Trrap. Within the SAGA complex, e(y)2, Sgf11, and not/nonstop form an additional subcomplex of SAGA called the DUB module (deubiquitination module). Component of the THO complex, composed of at least e(y)2, HPR1, THO2, THOC5, THOC6 and THOC7. Interacts with e(y)1. Interacts with su(Hw) (via zinc fingers). Interacts with xmas-2; required for localization to the nuclear periphery. Interacts with the nuclear pore complex (NPC).

It is found in the nucleus. The protein localises to the nucleoplasm. It localises to the cytoplasm. Involved in mRNA export coupled transcription activation by association with both the AMEX and the SAGA complexes. The SAGA complex is a multiprotein complex that activates transcription by remodeling chromatin and mediating histone acetylation and deubiquitination. Within the SAGA complex, participates in a subcomplex that specifically deubiquitinates histone H2B. The SAGA complex is recruited to specific gene promoters by activators, where it is required for transcription. Required for nuclear receptor-mediated transactivation. Involved in transcription elongation by recruiting the THO complex onto nascent mRNA. The AMEX complex functions in docking export-competent ribonucleoprotein particles (mRNPs) to the nuclear entrance of the nuclear pore complex (nuclear basket). AMEX participates in mRNA export and accurate chromatin positioning in the nucleus by tethering genes to the nuclear periphery. The polypeptide is Enhancer of yellow 2 transcription factor (Drosophila ananassae (Fruit fly)).